Reading from the N-terminus, the 302-residue chain is Ribosomal RNA small subunit methyltransferase H (302 aa).

Residues 32-34 (GGH), D51, F78, D97, and Q104 contribute to the S-adenosyl-L-methionine site.

It belongs to the methyltransferase superfamily. RsmH family.

Its subcellular location is the cytoplasm. The catalysed reaction is cytidine(1402) in 16S rRNA + S-adenosyl-L-methionine = N(4)-methylcytidine(1402) in 16S rRNA + S-adenosyl-L-homocysteine + H(+). Functionally, specifically methylates the N4 position of cytidine in position 1402 (C1402) of 16S rRNA. The chain is Ribosomal RNA small subunit methyltransferase H from Nitratiruptor sp. (strain SB155-2).